A 177-amino-acid polypeptide reads, in one-letter code: Ubiquinol-cytochrome c reductase iron-sulfur subunit (177 aa).

A helical transmembrane segment spans residues 18-38; sequence IVLTASSVAAVGAACAFWPII. Residues 88-175 form the Rieske domain; that stretch reads ARAVKMSELI…YIFISDKKIR (88 aa). [2Fe-2S] cluster contacts are provided by Cys120, His122, Cys139, and His142. An intrachain disulfide couples Cys125 to Cys141.

The protein belongs to the Rieske iron-sulfur protein family. As to quaternary structure, the main subunits of complex b-c1 are: cytochrome b, cytochrome c1 and the Rieske protein. [2Fe-2S] cluster is required as a cofactor.

Its subcellular location is the cell membrane. The enzyme catalyses a quinol + 2 Fe(III)-[cytochrome c](out) = a quinone + 2 Fe(II)-[cytochrome c](out) + 2 H(+)(out). Functionally, component of the ubiquinol-cytochrome c reductase complex (complex III or cytochrome b-c1 complex), which is a respiratory chain that generates an electrochemical potential coupled to ATP synthesis. The chain is Ubiquinol-cytochrome c reductase iron-sulfur subunit (petA) from Rickettsia prowazekii (strain Madrid E).